We begin with the raw amino-acid sequence, 442 residues long: Trigger factor (442 aa).

Residues 162–247 form the PPIase FKBP-type domain; that stretch reads GDTVTIDYKG…IHEVKSKQLP (86 aa).

The protein belongs to the FKBP-type PPIase family. Tig subfamily.

It localises to the cytoplasm. It carries out the reaction [protein]-peptidylproline (omega=180) = [protein]-peptidylproline (omega=0). In terms of biological role, involved in protein export. Acts as a chaperone by maintaining the newly synthesized protein in an open conformation. Functions as a peptidyl-prolyl cis-trans isomerase. This Lactobacillus acidophilus (strain ATCC 700396 / NCK56 / N2 / NCFM) protein is Trigger factor.